The sequence spans 1180 residues: DNA-directed RNA polymerase subunit beta (1180 aa).

It belongs to the RNA polymerase beta chain family. In terms of assembly, the RNAP catalytic core consists of 2 alpha, 1 beta, 1 beta' and 1 omega subunit. When a sigma factor is associated with the core the holoenzyme is formed, which can initiate transcription.

The enzyme catalyses RNA(n) + a ribonucleoside 5'-triphosphate = RNA(n+1) + diphosphate. In terms of biological role, DNA-dependent RNA polymerase catalyzes the transcription of DNA into RNA using the four ribonucleoside triphosphates as substrates. The chain is DNA-directed RNA polymerase subunit beta from Macrococcus caseolyticus (strain JCSC5402) (Macrococcoides caseolyticum).